The chain runs to 543 residues: CTP synthase (543 aa).

Residues 1 to 267 (MTKYVFVTGG…ATQVLNLLNL (267 aa)) form an amidoligase domain region. Position 13 (serine 13) interacts with CTP. Serine 13 is a UTP binding site. ATP is bound by residues 14 to 19 (SIGKGI) and aspartate 71. Mg(2+) contacts are provided by aspartate 71 and glutamate 141. Residues 148 to 150 (DIE), 188 to 193 (KTKPTQ), and lysine 224 contribute to the CTP site. UTP contacts are provided by residues 188-193 (KTKPTQ) and lysine 224. A Glutamine amidotransferase type-1 domain is found at 292–534 (EVAIVGKYVR…LAAAAKNSNR (243 aa)). Glycine 354 contacts L-glutamine. Cysteine 381 (nucleophile; for glutamine hydrolysis) is an active-site residue. L-glutamine-binding positions include 382–385 (LGMQ), glutamate 405, and arginine 462. Active-site residues include histidine 507 and glutamate 509.

Belongs to the CTP synthase family. As to quaternary structure, homotetramer.

It catalyses the reaction UTP + L-glutamine + ATP + H2O = CTP + L-glutamate + ADP + phosphate + 2 H(+). It carries out the reaction L-glutamine + H2O = L-glutamate + NH4(+). The catalysed reaction is UTP + NH4(+) + ATP = CTP + ADP + phosphate + 2 H(+). It participates in pyrimidine metabolism; CTP biosynthesis via de novo pathway; CTP from UDP: step 2/2. Allosterically activated by GTP, when glutamine is the substrate; GTP has no effect on the reaction when ammonia is the substrate. The allosteric effector GTP functions by stabilizing the protein conformation that binds the tetrahedral intermediate(s) formed during glutamine hydrolysis. Inhibited by the product CTP, via allosteric rather than competitive inhibition. Its function is as follows. Catalyzes the ATP-dependent amination of UTP to CTP with either L-glutamine or ammonia as the source of nitrogen. Regulates intracellular CTP levels through interactions with the four ribonucleotide triphosphates. In Thermosynechococcus vestitus (strain NIES-2133 / IAM M-273 / BP-1), this protein is CTP synthase.